The following is a 211-amino-acid chain: Glycerol-3-phosphate acyltransferase (211 aa).

5 helical membrane passes run 10–30 (FTTWLIFLISYLIGSIPFGLL), 63–83 (ALTLLCDILKGTLVILVIKFL), 90–110 (NIFISLAGFFAFLGHLFPVWL), 126–146 (LGLYWPAAIVFITAWIVLFLI), and 152–172 (LSALIAVIITPIFVHFSYPYL).

Belongs to the PlsY family. As to quaternary structure, probably interacts with PlsX.

It is found in the cell inner membrane. It carries out the reaction an acyl phosphate + sn-glycerol 3-phosphate = a 1-acyl-sn-glycero-3-phosphate + phosphate. It functions in the pathway lipid metabolism; phospholipid metabolism. Its function is as follows. Catalyzes the transfer of an acyl group from acyl-phosphate (acyl-PO(4)) to glycerol-3-phosphate (G3P) to form lysophosphatidic acid (LPA). This enzyme utilizes acyl-phosphate as fatty acyl donor, but not acyl-CoA or acyl-ACP. This chain is Glycerol-3-phosphate acyltransferase, found in Bartonella henselae (strain ATCC 49882 / DSM 28221 / CCUG 30454 / Houston 1) (Rochalimaea henselae).